We begin with the raw amino-acid sequence, 305 residues long: MHTDLRADQKAEVLIEALPWLEEFAGQRIVVKYGGNAMVDDHLKQCFAEDMVFLRQVGLHPIVVHGGGPQISHMLKALGIKSEFKGGLRVTTPEAMDVVRMVLTGKVSRELVGLINAHGPLAVGLSGEDGGLFSAMQRRPIIDGKPTDIGLVGDVVSVDASAVEDLVAAGRIPVVSSVAPNEEDATEVLNVNADSAAAALAAAVGARKLVILTDVDGLYADWPDKNSLIGRIGVENLRDMLPDLESGMRPKMEACVRAIDGGVPQAHIIDGRKPHSILNEIFTSAGIGTMVMPDEGLEMRSSYGY.

Residues 67–68 (GG), Arg-89, and Asn-190 each bind substrate.

Belongs to the acetylglutamate kinase family. ArgB subfamily.

It is found in the cytoplasm. It carries out the reaction N-acetyl-L-glutamate + ATP = N-acetyl-L-glutamyl 5-phosphate + ADP. Its pathway is amino-acid biosynthesis; L-arginine biosynthesis; N(2)-acetyl-L-ornithine from L-glutamate: step 2/4. In terms of biological role, catalyzes the ATP-dependent phosphorylation of N-acetyl-L-glutamate. The sequence is that of Acetylglutamate kinase from Bifidobacterium longum subsp. infantis (strain ATCC 15697 / DSM 20088 / JCM 1222 / NCTC 11817 / S12).